The following is a 314-amino-acid chain: 4-hydroxy-3-methylbut-2-enyl diphosphate reductase (314 aa).

A [4Fe-4S] cluster-binding site is contributed by Cys12. Residues His41 and His74 each contribute to the (2E)-4-hydroxy-3-methylbut-2-enyl diphosphate site. Dimethylallyl diphosphate contacts are provided by His41 and His74. Residues His41 and His74 each contribute to the isopentenyl diphosphate site. Cys96 provides a ligand contact to [4Fe-4S] cluster. His124 is a binding site for (2E)-4-hydroxy-3-methylbut-2-enyl diphosphate. His124 provides a ligand contact to dimethylallyl diphosphate. His124 contacts isopentenyl diphosphate. The active-site Proton donor is Glu126. Residue Thr167 coordinates (2E)-4-hydroxy-3-methylbut-2-enyl diphosphate. Position 197 (Cys197) interacts with [4Fe-4S] cluster. 4 residues coordinate (2E)-4-hydroxy-3-methylbut-2-enyl diphosphate: Ser225, Ser226, Asn227, and Ser269. Residues Ser225, Ser226, Asn227, and Ser269 each coordinate dimethylallyl diphosphate. The isopentenyl diphosphate site is built by Ser225, Ser226, Asn227, and Ser269.

It belongs to the IspH family. [4Fe-4S] cluster serves as cofactor.

It catalyses the reaction isopentenyl diphosphate + 2 oxidized [2Fe-2S]-[ferredoxin] + H2O = (2E)-4-hydroxy-3-methylbut-2-enyl diphosphate + 2 reduced [2Fe-2S]-[ferredoxin] + 2 H(+). The catalysed reaction is dimethylallyl diphosphate + 2 oxidized [2Fe-2S]-[ferredoxin] + H2O = (2E)-4-hydroxy-3-methylbut-2-enyl diphosphate + 2 reduced [2Fe-2S]-[ferredoxin] + 2 H(+). The protein operates within isoprenoid biosynthesis; dimethylallyl diphosphate biosynthesis; dimethylallyl diphosphate from (2E)-4-hydroxy-3-methylbutenyl diphosphate: step 1/1. It participates in isoprenoid biosynthesis; isopentenyl diphosphate biosynthesis via DXP pathway; isopentenyl diphosphate from 1-deoxy-D-xylulose 5-phosphate: step 6/6. Catalyzes the conversion of 1-hydroxy-2-methyl-2-(E)-butenyl 4-diphosphate (HMBPP) into a mixture of isopentenyl diphosphate (IPP) and dimethylallyl diphosphate (DMAPP). Acts in the terminal step of the DOXP/MEP pathway for isoprenoid precursor biosynthesis. This chain is 4-hydroxy-3-methylbut-2-enyl diphosphate reductase, found in Haemophilus influenzae (strain PittGG).